The primary structure comprises 487 residues: Glutamyl-tRNA(Gln) amidotransferase subunit A (487 aa).

Active-site charge relay system residues include K77 and S152. The Acyl-ester intermediate role is filled by S176.

This sequence belongs to the amidase family. GatA subfamily. Heterotrimer of A, B and C subunits.

The catalysed reaction is L-glutamyl-tRNA(Gln) + L-glutamine + ATP + H2O = L-glutaminyl-tRNA(Gln) + L-glutamate + ADP + phosphate + H(+). Functionally, allows the formation of correctly charged Gln-tRNA(Gln) through the transamidation of misacylated Glu-tRNA(Gln) in organisms which lack glutaminyl-tRNA synthetase. The reaction takes place in the presence of glutamine and ATP through an activated gamma-phospho-Glu-tRNA(Gln). The chain is Glutamyl-tRNA(Gln) amidotransferase subunit A from Ligilactobacillus salivarius (strain UCC118) (Lactobacillus salivarius).